Consider the following 125-residue polypeptide: Large ribosomal subunit protein bL12 (125 aa).

Belongs to the bacterial ribosomal protein bL12 family. As to quaternary structure, homodimer. Part of the ribosomal stalk of the 50S ribosomal subunit. Forms a multimeric L10(L12)X complex, where L10 forms an elongated spine to which 2 to 4 L12 dimers bind in a sequential fashion. Binds GTP-bound translation factors.

In terms of biological role, forms part of the ribosomal stalk which helps the ribosome interact with GTP-bound translation factors. Is thus essential for accurate translation. In Methylorubrum extorquens (strain CM4 / NCIMB 13688) (Methylobacterium extorquens), this protein is Large ribosomal subunit protein bL12.